The sequence spans 102 residues: NADH-quinone oxidoreductase subunit K (102 aa).

The next 3 membrane-spanning stretches (helical) occupy residues I5–L25, I31–F51, and F66–F86.

The protein belongs to the complex I subunit 4L family. In terms of assembly, NDH-1 is composed of 14 different subunits. Subunits NuoA, H, J, K, L, M, N constitute the membrane sector of the complex.

Its subcellular location is the cell inner membrane. It catalyses the reaction a quinone + NADH + 5 H(+)(in) = a quinol + NAD(+) + 4 H(+)(out). Its function is as follows. NDH-1 shuttles electrons from NADH, via FMN and iron-sulfur (Fe-S) centers, to quinones in the respiratory chain. The immediate electron acceptor for the enzyme in this species is believed to be ubiquinone. Couples the redox reaction to proton translocation (for every two electrons transferred, four hydrogen ions are translocated across the cytoplasmic membrane), and thus conserves the redox energy in a proton gradient. The chain is NADH-quinone oxidoreductase subunit K from Chelativorans sp. (strain BNC1).